The primary structure comprises 354 residues: Uroporphyrinogen decarboxylase (354 aa).

Substrate is bound by residues 27-31, Asp-77, Tyr-154, Thr-209, and His-327; that span reads RQAGR.

This sequence belongs to the uroporphyrinogen decarboxylase family. Homodimer.

Its subcellular location is the cytoplasm. It catalyses the reaction uroporphyrinogen III + 4 H(+) = coproporphyrinogen III + 4 CO2. It functions in the pathway porphyrin-containing compound metabolism; protoporphyrin-IX biosynthesis; coproporphyrinogen-III from 5-aminolevulinate: step 4/4. Its function is as follows. Catalyzes the decarboxylation of four acetate groups of uroporphyrinogen-III to yield coproporphyrinogen-III. This chain is Uroporphyrinogen decarboxylase, found in Citrobacter koseri (strain ATCC BAA-895 / CDC 4225-83 / SGSC4696).